The following is a 469-amino-acid chain: Receptor-type adenylate cyclase (469 aa).

Residues 1–59 (VDTAEKLSKNGCASNYGATQISVWSMARALNASIPPLTNPMTPSMTFRNSNAGRISGVA) are Extracellular-facing. An N-linked (GlcNAc...) asparagine glycan is attached at Asn-31. A helical membrane pass occupies residues 60-80 (LVGVIIGGALALFLVVALGVV). The Cytoplasmic segment spans residues 81–469 (PYFFLHNTRD…IDLENDSTTS (389 aa)). The Guanylate cyclase domain occupies 103–257 (TLIFTDIESS…RTSNMAARTE (155 aa)). Mg(2+)-binding residues include Asp-108 and Asp-151.

The protein belongs to the adenylyl cyclase class-3 family. The cofactor is Mg(2+).

Its subcellular location is the cell membrane. It carries out the reaction ATP = 3',5'-cyclic AMP + diphosphate. In terms of biological role, could act as a receptor for an unknown ligand. In Trypanosoma equiperdum, this protein is Receptor-type adenylate cyclase (ESAG4C).